Consider the following 213-residue polypeptide: Holliday junction branch migration complex subunit RuvA (213 aa).

The domain I stretch occupies residues 1–63 (MISFLRGTVA…EDSMTLFGFA (63 aa)). The domain II stretch occupies residues 64 to 140 (DDDEREVFEV…LVPHGTAPAA (77 aa)). The flexible linker stretch occupies residues 140–144 (AATTA). The segment at 145 to 213 (AEASWKPQVV…RAGNRVGSRG (69 aa)) is domain III.

The protein belongs to the RuvA family. Homotetramer. Forms an RuvA(8)-RuvB(12)-Holliday junction (HJ) complex. HJ DNA is sandwiched between 2 RuvA tetramers; dsDNA enters through RuvA and exits via RuvB. An RuvB hexamer assembles on each DNA strand where it exits the tetramer. Each RuvB hexamer is contacted by two RuvA subunits (via domain III) on 2 adjacent RuvB subunits; this complex drives branch migration. In the full resolvosome a probable DNA-RuvA(4)-RuvB(12)-RuvC(2) complex forms which resolves the HJ.

It localises to the cytoplasm. The RuvA-RuvB-RuvC complex processes Holliday junction (HJ) DNA during genetic recombination and DNA repair, while the RuvA-RuvB complex plays an important role in the rescue of blocked DNA replication forks via replication fork reversal (RFR). RuvA specifically binds to HJ cruciform DNA, conferring on it an open structure. The RuvB hexamer acts as an ATP-dependent pump, pulling dsDNA into and through the RuvAB complex. HJ branch migration allows RuvC to scan DNA until it finds its consensus sequence, where it cleaves and resolves the cruciform DNA. The polypeptide is Holliday junction branch migration complex subunit RuvA (Pseudarthrobacter chlorophenolicus (strain ATCC 700700 / DSM 12829 / CIP 107037 / JCM 12360 / KCTC 9906 / NCIMB 13794 / A6) (Arthrobacter chlorophenolicus)).